Here is a 502-residue protein sequence, read N- to C-terminus: MQFFSLVSIFLFLSFLFLLRKWKNSNSQSKKLPPGPWKLPLLGSMLHMVGGLPHHVLRDLAKKYGPLMHLQLGEVSAVVVTSPDMAKEVLKTHDIAFASRPKLLAPEIVCYNRSDIAFCPYGDYWRQMRKICVLEVLSAKNVRSFSSIRRDEVLRLVNFVRSSTSEPVNFTERLFLFTSSMTCRSAFGKVFKEQETFIQLIKEVIGLAGGFDVADIFPSLKFLHVLTGMEGKIMKAHHKVDAIVEDVINEHKKNLAMGKTNGALGGEDLIDVLLRLMNDGGLQFPITNDNIKAIIFDMFAAGTETSSSTLVWAMVQMMRNPTILAKAQAEVREAFKGKETFDENDVEELKYLKLVIKETLRLHPPVPLLVPRECREETEINGYTIPVKTKVMVNVWALGRDPKYWDDADNFKPERFEQCSVDFIGNNFEYLPFGGGRRICPGISFGLANVYLPLAQLLYHFDWKLPTGMEPKDLDLTELVGVTAARKSDLMLVATPYQPSRE.

A helical membrane pass occupies residues Gln2 to Trp22. Cys440 provides a ligand contact to heme.

Belongs to the cytochrome P450 family. Heme is required as a cofactor.

The protein localises to the membrane. It catalyses the reaction (-)-vetispiradiene + 2 reduced [NADPH--hemoprotein reductase] + 2 O2 = solavetivone + 2 oxidized [NADPH--hemoprotein reductase] + 3 H2O + 2 H(+). Involved in the biosynthesis of solavetivone, a potent antifungal phytoalexin. Catalyzes the successive and independent hydroxylations of premnaspirodiene and solavetivol. The first hydroxylation step is 3-fold more efficient than the second hydroxylation reaction. The sequence is that of Premnaspirodiene oxygenase (CYP71D55) from Hyoscyamus muticus (Egyptian henbane).